Reading from the N-terminus, the 423-residue chain is Glucose-1-phosphate adenylyltransferase (423 aa).

Alpha-D-glucose 1-phosphate is bound by residues Tyr98, Gly163, 178–179, and Ser189; that span reads EK.

The protein belongs to the bacterial/plant glucose-1-phosphate adenylyltransferase family. Homotetramer.

It catalyses the reaction alpha-D-glucose 1-phosphate + ATP + H(+) = ADP-alpha-D-glucose + diphosphate. It participates in glycan biosynthesis; glycogen biosynthesis. In terms of biological role, involved in the biosynthesis of ADP-glucose, a building block required for the elongation reactions to produce glycogen. Catalyzes the reaction between ATP and alpha-D-glucose 1-phosphate (G1P) to produce pyrophosphate and ADP-Glc. This is Glucose-1-phosphate adenylyltransferase from Thermotoga sp. (strain RQ2).